The chain runs to 609 residues: UvrABC system protein C (609 aa).

The region spanning 16–94 (SSAGVYRMYD…IKQYMPKYNV (79 aa)) is the GIY-YIG domain. In terms of domain architecture, UVR spans 203-238 (QQVISALVDKMELAAERQAYEQAARFRDQIMALRKV).

It belongs to the UvrC family. In terms of assembly, interacts with UvrB in an incision complex.

It localises to the cytoplasm. In terms of biological role, the UvrABC repair system catalyzes the recognition and processing of DNA lesions. UvrC both incises the 5' and 3' sides of the lesion. The N-terminal half is responsible for the 3' incision and the C-terminal half is responsible for the 5' incision. This Shewanella baltica (strain OS195) protein is UvrABC system protein C.